A 475-amino-acid chain; its full sequence is Probable proline--tRNA ligase, mitochondrial (475 aa).

The N-terminal 29 residues, 1 to 29 (MEGLLTRCRALPALATCSRQLSGYVPCRF), are a transit peptide targeting the mitochondrion.

Belongs to the class-II aminoacyl-tRNA synthetase family.

Its subcellular location is the mitochondrion matrix. The catalysed reaction is tRNA(Pro) + L-proline + ATP = L-prolyl-tRNA(Pro) + AMP + diphosphate. Mitochondrial aminoacyl-tRNA synthetase that catalyzes the specific attachment of the proline amino acid (aa) to the homologous transfer RNA (tRNA), further participating in protein synthesis. The reaction occurs in a two steps: proline is first activated by ATP to form Pro-AMP and then transferred to the acceptor end of tRNA(Pro). The sequence is that of Probable proline--tRNA ligase, mitochondrial from Homo sapiens (Human).